A 1405-amino-acid chain; its full sequence is DNA-directed RNA polymerase subunit beta' (1405 aa).

The Zn(2+) site is built by Cys70, Cys72, Cys85, and Cys88. The Mg(2+) site is built by Asp460, Asp462, and Asp464. Zn(2+) contacts are provided by Cys815, Cys890, Cys897, and Cys900.

It belongs to the RNA polymerase beta' chain family. The RNAP catalytic core consists of 2 alpha, 1 beta, 1 beta' and 1 omega subunit. When a sigma factor is associated with the core the holoenzyme is formed, which can initiate transcription. Mg(2+) serves as cofactor. It depends on Zn(2+) as a cofactor.

The catalysed reaction is RNA(n) + a ribonucleoside 5'-triphosphate = RNA(n+1) + diphosphate. DNA-dependent RNA polymerase catalyzes the transcription of DNA into RNA using the four ribonucleoside triphosphates as substrates. This is DNA-directed RNA polymerase subunit beta' from Xanthomonas campestris pv. campestris (strain 8004).